A 355-amino-acid polypeptide reads, in one-letter code: Transcription factor TCP13 (355 aa).

A disordered region spans residues 1 to 57 (MNIVSWKDANDEVAGGATTRREREVKEDQEETEVRATSGKTVIKKQPTSISSSSSSW). Residues 74-132 (GKDRHSKVCTLRGLRDRRVRLSVPTAIQLYDLQERLGVDQPSKAVDWLLDAAKEEIDEL) enclose the TCP domain. The interval 329–355 (TNSTTTANMSRHLGSERCTSRGSDHHM) is disordered. The segment covering 341–355 (LGSERCTSRGSDHHM) has biased composition (basic and acidic residues).

In terms of assembly, interacts with AHL27 and AHL29. Interacts with SPL. Interacts with KIN10; KIN11 and FLZ3. Expressed in cotyledons, particularly in the vascular region, in leaves, buds, flowers and immature siliques, and, to a lower extent, in roots.

It is found in the nucleus. The protein resides in the plastid. Its subcellular location is the chloroplast. Functionally, plays a pivotal role in the control of morphogenesis of shoot organs by negatively regulating the expression of boundary-specific genes such as CUC genes, probably through the induction of miRNA (e.g. miR164). Binds to the 3'-ACC-5' repeats in the light-responsive promoter (LRP) of psbD, and activates its transcription. Participates in ovule development. This chain is Transcription factor TCP13 (TCP13), found in Arabidopsis thaliana (Mouse-ear cress).